The following is a 396-amino-acid chain: GTPase Obg (396 aa).

Positions 1 to 159 (MKFVDEASIY…RTLKLEMKVL (159 aa)) constitute an Obg domain. The segment at 120–146 (GGHHGLGNTRFKSSTNRAPRQTTKGTV) is disordered. Positions 129–144 (RFKSSTNRAPRQTTKG) are enriched in polar residues. The 174-residue stretch at 160–333 (ADVGLLGLPN…LCLDLMTALD (174 aa)) folds into the OBG-type G domain. GTP contacts are provided by residues 166–173 (GLPNAGKS), 191–195 (FTTLV), 213–216 (DIPG), 283–286 (NKTD), and 314–316 (SAI). 2 residues coordinate Mg(2+): S173 and T193.

The protein belongs to the TRAFAC class OBG-HflX-like GTPase superfamily. OBG GTPase family. In terms of assembly, monomer. Requires Mg(2+) as cofactor.

It is found in the cytoplasm. Functionally, an essential GTPase which binds GTP, GDP and possibly (p)ppGpp with moderate affinity, with high nucleotide exchange rates and a fairly low GTP hydrolysis rate. Plays a role in control of the cell cycle, stress response, ribosome biogenesis and in those bacteria that undergo differentiation, in morphogenesis control. The sequence is that of GTPase Obg from Marinomonas sp. (strain MWYL1).